A 285-amino-acid polypeptide reads, in one-letter code: Undecaprenyl-diphosphatase (285 aa).

The next 7 helical transmembrane spans lie at 3-23 (ILLL…EFLP), 41-61 (GEIV…AVIW), 87-107 (LLIA…LIKE), 109-129 (LFHP…ILWV), 197-217 (TEFS…YSLI), 226-246 (GDLP…LVCI), and 260-280 (VFAW…WGGW).

The protein belongs to the UppP family.

Its subcellular location is the cell inner membrane. The catalysed reaction is di-trans,octa-cis-undecaprenyl diphosphate + H2O = di-trans,octa-cis-undecaprenyl phosphate + phosphate + H(+). Its function is as follows. Catalyzes the dephosphorylation of undecaprenyl diphosphate (UPP). Confers resistance to bacitracin. This chain is Undecaprenyl-diphosphatase, found in Methylibium petroleiphilum (strain ATCC BAA-1232 / LMG 22953 / PM1).